Here is a 260-residue protein sequence, read N- to C-terminus: Thiazole synthase (260 aa).

Lys96 serves as the catalytic Schiff-base intermediate with DXP. Residues Gly157, 184-185 (AG), and 206-207 (NT) contribute to the 1-deoxy-D-xylulose 5-phosphate site.

Belongs to the ThiG family. As to quaternary structure, homotetramer. Forms heterodimers with either ThiH or ThiS.

It is found in the cytoplasm. It catalyses the reaction [ThiS sulfur-carrier protein]-C-terminal-Gly-aminoethanethioate + 2-iminoacetate + 1-deoxy-D-xylulose 5-phosphate = [ThiS sulfur-carrier protein]-C-terminal Gly-Gly + 2-[(2R,5Z)-2-carboxy-4-methylthiazol-5(2H)-ylidene]ethyl phosphate + 2 H2O + H(+). The protein operates within cofactor biosynthesis; thiamine diphosphate biosynthesis. Catalyzes the rearrangement of 1-deoxy-D-xylulose 5-phosphate (DXP) to produce the thiazole phosphate moiety of thiamine. Sulfur is provided by the thiocarboxylate moiety of the carrier protein ThiS. In vitro, sulfur can be provided by H(2)S. The polypeptide is Thiazole synthase (Bradyrhizobium sp. (strain BTAi1 / ATCC BAA-1182)).